The chain runs to 386 residues: MDRFVWTSGLLEINETLVIQQRGVRIYDGEEKIKFDAGTLLLSTHRLIWRDQKNHECCMAILLSQIVFIEEQAAGIGKSAKIVVHLHPAPPNKEPGPFQSSKNSYIKLSFKEHGQIEFYRRLSEEMTQRRWENMPVSQSLQTNRGPQPGRIRAVGIVGIERKLEEKRKETDKNISEAFEDLSKLMIKAKEMVELSKSIANKIKDKQGDITEDETIRFKSYLLSMGIANPVTRETYGSGTQYHMQLAKQLAGILQVPLEERGGIMSLTEVYCLVNRARGMELLSPEDLVNACKMLEALKLPLRLRVFDSGVMVIELQSHKEEEMVASALETVSEKGSLTSEEFAKLVGMSVLLAKERLLLAEKMGHLCRDDSVEGLRFYPNLFMTQS.

One can recognise a GLUE N-terminal domain in the interval 1 to 88 (MDRFVWTSGL…SAKIVVHLHP (88 aa)). Residues 105–138 (YIKLSFKEHGQIEFYRRLSEEMTQRRWENMPVSQ) form the GLUE C-terminal domain. Residues 160-185 (ERKLEEKRKETDKNISEAFEDLSKLM) are a coiled coil.

This sequence belongs to the VPS36 family. Component of a complex at least composed of ELL, SNF8/EAP30, VPS25/EAP20 and VPS36/EAP45. Component of the endosomal sorting complex required for transport II (ESCRT-II), composed of SNF8, VPS36 and two copies of VPS25. Interacts with VPS25, SNF8, TSG101 and CHMP6. Interacts (via GLUE domain) with ubiquitin. Interacts with RILPL1 (via the C-terminal domain); which recruits ESCRT-II to the endosome membranes. Interacts with ECPAS.

The protein localises to the cytoplasm. It localises to the endosome. Its subcellular location is the late endosome. The protein resides in the membrane. It is found in the nucleus. Its function is as follows. Component of the ESCRT-II complex (endosomal sorting complex required for transport II), which is required for multivesicular body (MVB) formation and sorting of endosomal cargo proteins into MVBs. The MVB pathway mediates delivery of transmembrane proteins into the lumen of the lysosome for degradation. The ESCRT-II complex is probably involved in the recruitment of the ESCRT-III complex. Its ability to bind ubiquitin probably plays a role in endosomal sorting of ubiquitinated cargo proteins by ESCRT complexes. The ESCRT-II complex may also play a role in transcription regulation, possibly via its interaction with ELL. Binds phosphoinosides such as PtdIns(3,4,5)P3. The sequence is that of Vacuolar protein-sorting-associated protein 36 (VPS36) from Homo sapiens (Human).